The chain runs to 852 residues: Protein Shroom1 (852 aa).

Met1 is modified (N-acetylmethionine). The residue at position 18 (Ser18) is a Phosphoserine. 3 disordered regions span residues 34–54 (SSFS…GTDL), 81–109 (TSPR…PLNR), and 125–218 (AAQA…ANQQ). Position 103 is a phosphothreonine (Thr103). Low complexity predominate over residues 125-144 (AAQAAEPPSPPASRAAYRQR). Ser133 and Ser137 each carry phosphoserine. Residues 145–233 (LQGAQRRVLR…SEPGKLDRVG (89 aa)) enclose the ASD1 domain. A compositionally biased stretch (basic and acidic residues) spans 152 to 164 (VLRETSFQRKELR). Phosphoserine occurs at positions 166, 190, and 224. 4 disordered regions span residues 276–320 (LPET…GSGG), 399–431 (MRSP…QRTG), 464–496 (SRPT…TAAE), and 823–852 (DLGH…LLLT). The span at 279–289 (TQPQGSMNLDS) shows a compositional bias: polar residues. The span at 301–313 (ASRSRSASGEVLG) shows a compositional bias: low complexity. Over residues 465–479 (RPTSHTPTGTANDNI) the composition is skewed to polar residues. One can recognise an ASD2 domain in the interval 543–825 (EELVQELARL…QLDAIRDDLG (283 aa)). Pro residues predominate over residues 830-852 (SPSPARPPGTCPPVQPPFPLLLT).

The protein belongs to the shroom family. Interacts with F-actin.

Its subcellular location is the cytoplasm. It is found in the cytoskeleton. May be involved in the assembly of microtubule arrays during cell elongation. In Homo sapiens (Human), this protein is Protein Shroom1 (SHROOM1).